Consider the following 128-residue polypeptide: Probable 4-amino-4-deoxy-L-arabinose-phosphoundecaprenol flippase subunit ArnF (128 aa).

The Cytoplasmic segment spans residues 1–10 (MKGYLWGGAS). The helical transmembrane segment at 11-31 (VVLVTVAQLVLKWGMMNIPLL) threads the bilayer. Residues 32–47 (SLADINVQFLTMYFVQ) are Periplasmic-facing. Residues 48 to 68 (LASVMCGLMGYALSMLCWFFA) traverse the membrane as a helical segment. At 69–77 (LRYLPLNRA) the chain is on the cytoplasmic side. A helical transmembrane segment spans residues 78–98 (YPLLSLSYALVYLGAVLLPWF). Residues 99–101 (NEP) lie on the Periplasmic side of the membrane. A helical membrane pass occupies residues 102–122 (ATLLKTLGAGFILLGIWLINI). Residues 123–128 (KPIKAS) are Cytoplasmic-facing.

Belongs to the ArnF family. Heterodimer of ArnE and ArnF.

The protein resides in the cell inner membrane. Its pathway is bacterial outer membrane biogenesis; lipopolysaccharide biosynthesis. In terms of biological role, translocates 4-amino-4-deoxy-L-arabinose-phosphoundecaprenol (alpha-L-Ara4N-phosphoundecaprenol) from the cytoplasmic to the periplasmic side of the inner membrane. This is Probable 4-amino-4-deoxy-L-arabinose-phosphoundecaprenol flippase subunit ArnF from Yersinia pseudotuberculosis serotype O:1b (strain IP 31758).